The chain runs to 640 residues: Kelch-like protein 17 (640 aa).

The segment at 1-50 (MQPRGERPAGRTQSPEHSSPGPGPEAPPPPQPPAPEAERARPRQARPAAP) is disordered. The segment covering 21-35 (GPGPEAPPPPQPPAP) has biased composition (pro residues). One can recognise a BTB domain in the interval 90 to 157 (CDIVLHVAAK…AYTAEIVVGE (68 aa)). In terms of domain architecture, BACK spans 192-294 (CLGIRGFADT…SRDFLLGHVD (103 aa)). Positions 287–639 (DFLLGHVDAE…SPTLSVSSTS (353 aa)) are interaction with F-actin. Kelch repeat units lie at residues 341–387 (VLFA…AVGN), 388–434 (RLYA…ALHG), 436–481 (LYAA…TLDG), 482–528 (NLYA…VLEG), 530–575 (LYVA…AMDG), and 576–622 (WLYA…VLEL). The interval 638–640 (TSL) is interaction with PDZK1.

In terms of assembly, interacts with F-actin; the interaction disrupts the F-actin structures and leads to marked changes of neuronal morphology. Component of a complex, composed of PDZK1, SYNGAP1, KLHL17 and NMDA receptors. Interacts directly with PDZK1 (via PDZ1 domain); the interaction is important for integrity of actin cytoskeleton structures in neurons. Interacts with DLG4 and SYNGAP1. Interacts (via kelch repeats) with GRIK2 (via C-terminus); the interaction targets GRIK2 for degradation via ubiquitin-proteasome pathway. Interacts with GRIK1. Interacts with (via BTB domain) CUL3; the interaction regulates surface GRIK2 expression.

The protein resides in the postsynaptic density. It is found in the synapse. The protein operates within protein modification; protein ubiquitination. Substrate-recognition component of some cullin-RING-based BCR (BTB-CUL3-RBX1) E3 ubiquitin-protein ligase complexes. The BCR(KLHL17) complex mediates the ubiquitination and subsequent degradation of GLUR6. May play a role in the actin-based neuronal function. The protein is Kelch-like protein 17 (Klhl17) of Mus musculus (Mouse).